Reading from the N-terminus, the 95-residue chain is Protein TusB (95 aa).

Belongs to the DsrH/TusB family. Heterohexamer, formed by a dimer of trimers. The hexameric TusBCD complex contains 2 copies each of TusB, TusC and TusD. The TusBCD complex interacts with TusE.

The protein localises to the cytoplasm. Functionally, part of a sulfur-relay system required for 2-thiolation of 5-methylaminomethyl-2-thiouridine (mnm(5)s(2)U) at tRNA wobble positions. In Escherichia coli O139:H28 (strain E24377A / ETEC), this protein is Protein TusB.